A 424-amino-acid polypeptide reads, in one-letter code: PDZ and LIM domain protein 7 (424 aa).

The PDZ domain occupies 1–85 (MDSFKVVLEG…RLSLSLSRAQ (85 aa)). The residue at position 78 (Ser78) is a Phosphoserine. Polar residues predominate over residues 81 to 98 (LSRAQPAQSKPQKVQTPD). A disordered region spans residues 81–221 (LSRAQPAQSK…HTQPATPTPM (141 aa)). At Thr96 the chain carries Phosphothreonine. Residues 110–123 (SKQRLMEDTEDWRP) are compositionally biased toward basic and acidic residues. The span at 174–187 (EPWPGPTTPSPTSR) shows a compositional bias: pro residues. Positions 204–221 (KTSTVLTRHTQPATPTPM) are enriched in polar residues. 3 LIM zinc-binding domains span residues 247-305 (PVCH…VRYA), 306-365 (PSCA…MFGT), and 366-424 (KCRG…FSHV).

In terms of assembly, binds via its LIM zinc-binding 3 domain (LIM 3) domain to endocytic codes of INSR, but not with those of IGF1R, LDLR, TFRC, or EGFR. Interacts with various PKC isoforms through the LIM zinc-binding domains. Binds to RET in a phosphorylation-independent manner via its LIM zinc-binding 2 domain (LIM 2). Probably part of a complex with SHC and the RET dimer. Interacts with TPM2, TBX4 and TBX5.

It is found in the cytoplasm. Its subcellular location is the cytoskeleton. May function as a scaffold on which the coordinated assembly of proteins can occur. May play a role as an adapter that, via its PDZ domain, localizes LIM-binding proteins to actin filaments of both skeletal muscle and nonmuscle tissues. Involved in both of the two fundamental mechanisms of bone formation, direct bone formation (e.g. embryonic flat bones mandible and cranium), and endochondral bone formation (e.g. embryonic long bone development). Plays a role during fracture repair. Involved in BMP6 signaling pathway. The chain is PDZ and LIM domain protein 7 (PDLIM7) from Bos taurus (Bovine).